Reading from the N-terminus, the 133-residue chain is Small ribosomal subunit protein uS9 (133 aa).

Residues 97-133 form a disordered region; that stretch reads MKQELKSQGFLTRDPRKKERKKYGRKKARKSFQFSKR. A compositionally biased stretch (basic residues) spans 114-133; that stretch reads KERKKYGRKKARKSFQFSKR.

It belongs to the universal ribosomal protein uS9 family.

The sequence is that of Small ribosomal subunit protein uS9 (rpsI) from Chlamydia muridarum (strain MoPn / Nigg).